Here is a 307-residue protein sequence, read N- to C-terminus: 1D-myo-inositol 2-acetamido-2-deoxy-alpha-D-glucopyranoside deacetylase 1 (307 aa).

Zn(2+)-binding residues include H21, D24, and H157.

The protein belongs to the MshB deacetylase family. Zn(2+) serves as cofactor.

It catalyses the reaction 1D-myo-inositol 2-acetamido-2-deoxy-alpha-D-glucopyranoside + H2O = 1D-myo-inositol 2-amino-2-deoxy-alpha-D-glucopyranoside + acetate. Catalyzes the deacetylation of 1D-myo-inositol 2-acetamido-2-deoxy-alpha-D-glucopyranoside (GlcNAc-Ins) in the mycothiol biosynthesis pathway. This Frankia casuarinae (strain DSM 45818 / CECT 9043 / HFP020203 / CcI3) protein is 1D-myo-inositol 2-acetamido-2-deoxy-alpha-D-glucopyranoside deacetylase 1.